The following is a 520-amino-acid chain: 2-isopropylmalate synthase (520 aa).

A Pyruvate carboxyltransferase domain is found at 4-266 (VEFLDTTLRD…TSDIVLNETV (263 aa)). Asp13, His201, His203, and Asn237 together coordinate Mn(2+). The tract at residues 390–520 (HFGDLKLTSN…AVSFRDVPTN (131 aa)) is regulatory domain.

Belongs to the alpha-IPM synthase/homocitrate synthase family. LeuA type 1 subfamily. In terms of assembly, homodimer. Mn(2+) is required as a cofactor.

The protein resides in the cytoplasm. It catalyses the reaction 3-methyl-2-oxobutanoate + acetyl-CoA + H2O = (2S)-2-isopropylmalate + CoA + H(+). It participates in amino-acid biosynthesis; L-leucine biosynthesis; L-leucine from 3-methyl-2-oxobutanoate: step 1/4. Its function is as follows. Catalyzes the condensation of the acetyl group of acetyl-CoA with 3-methyl-2-oxobutanoate (2-ketoisovalerate) to form 3-carboxy-3-hydroxy-4-methylpentanoate (2-isopropylmalate). The sequence is that of 2-isopropylmalate synthase from Streptococcus gallolyticus (strain UCN34).